The following is a 351-amino-acid chain: Formyl peptide receptor-related sequence 1 (351 aa).

The Extracellular portion of the chain corresponds to 1–27 (METNYSIPLNGSDVVIYDSTISRVLWI). Residues Asn4 and Asn10 are each glycosylated (N-linked (GlcNAc...) asparagine). Residues 28–50 (LSMVVVSITFFLGVLGNGLVIWV) form a helical membrane-spanning segment. Residues 51 to 61 (AGFRMPHTVTT) are Cytoplasmic-facing. The chain crosses the membrane as a helical span at residues 62-83 (IWYLNLALADFSFTATLPFLLV). At 84–100 (EMAMKEKWPFGWFLCKL) the chain is on the extracellular side. Cys98 and Cys176 form a disulfide bridge. A helical transmembrane segment spans residues 101 to 121 (VHIAVDVNLFGSVFLIAVIAL). Over 122–140 (DRCICVLHPVWAQNHRTVS) the chain is Cytoplasmic. Residues 141–162 (LARNVVVGSWIFALILTLPLFL) traverse the membrane as a helical segment. Over 163–205 (FLTTVRDARGDVHCRLSFVSWGNSVEERLNTAITFVTTRGIIR) the chain is Extracellular. The helical transmembrane segment at 206 to 226 (FIVSFSLPMSFVAICYGLITT) threads the bilayer. Residues 227 to 242 (KIHKKAFVNSSRPFRV) lie on the Cytoplasmic side of the membrane. The chain crosses the membrane as a helical span at residues 243-266 (LTGVVASFFICWFPFQLVALLGTV). The Extracellular segment spans residues 267–286 (WLKEMQFSGSYKIIGRLVNP). Residues 287 to 306 (TSSLAFFNSCLNPILYVFMG) traverse the membrane as a helical segment. At 307 to 351 (QDFQERLIHSLSSRLQRALSEDSGHISDTRTNLASLPEDIEIKAI) the chain is on the cytoplasmic side.

The protein belongs to the G-protein coupled receptor 1 family. In terms of tissue distribution, expressed exclusively in vomeronasal neurons. Expressed in 0.6 % of a subset of sensory neurons located in the basal layer of the vomeronasal organ. Each neuron appears to express only one receptor gene. Expressed mostly in neutrophils, followed by spleen and lung and expressed at very low levels in heart and liver.

The protein localises to the cell membrane. Functionally, low affinity receptor for N-formyl-methionyl peptides. Receptor for lipoxin A4. May have an olfactory function associated with the identification of pathogens or of pathogenic states. The polypeptide is Formyl peptide receptor-related sequence 1 (Fpr-s1) (Mus musculus (Mouse)).